Reading from the N-terminus, the 1401-residue chain is DNA-directed RNA polymerase subunit beta' (1401 aa).

Residues Cys-71, Cys-73, Cys-86, and Cys-89 each coordinate Zn(2+). Mg(2+) contacts are provided by Asp-462, Asp-464, and Asp-466. Cys-810, Cys-884, Cys-891, and Cys-894 together coordinate Zn(2+). The segment at 1378–1401 (EKQATIVPSAPEPEPLALPTPEQS) is disordered.

This sequence belongs to the RNA polymerase beta' chain family. As to quaternary structure, the RNAP catalytic core consists of 2 alpha, 1 beta, 1 beta' and 1 omega subunit. When a sigma factor is associated with the core the holoenzyme is formed, which can initiate transcription. Mg(2+) serves as cofactor. Zn(2+) is required as a cofactor.

It carries out the reaction RNA(n) + a ribonucleoside 5'-triphosphate = RNA(n+1) + diphosphate. DNA-dependent RNA polymerase catalyzes the transcription of DNA into RNA using the four ribonucleoside triphosphates as substrates. This is DNA-directed RNA polymerase subunit beta' from Rhodopseudomonas palustris (strain BisB18).